The chain runs to 67 residues: MGAMEGQLWIVFMWVSGVVCGICVLMSENDNIFNNNNNNIIIIIIIIMMIKIMKIIIINNMIIINND.

The next 2 helical transmembrane spans lie at 6–26 (GQLW…CVLM) and 38–58 (NNII…IIII).

The protein resides in the membrane. This is an uncharacterized protein from Dictyostelium discoideum (Social amoeba).